A 302-amino-acid chain; its full sequence is Protein FLOURY 1 (302 aa).

A run of 2 helical transmembrane segments spans residues 27–47 and 82–102; these read SAGA…VAVL and LAGS…FLAV. The tract at residues 160–195 is disordered; it reads SSKPVSRSLAAEFDQEADGEEEDNAGETSDPDDGSV. Over residues 172 to 192 the composition is skewed to acidic residues; the sequence is FDQEADGEEEDNAGETSDPDD. The 107-residue stretch at 193-299 folds into the GTD-binding domain; sequence GSVQYLRRRL…ALSETSEDDR (107 aa). Positions 199–254 form a coiled coil; the sequence is RRRLKEEMLLKEVALEELEKERHAAASAADEAMSKIACLRSEKALVEREARQFQEM. The disordered stretch occupies residues 283 to 302; sequence PEAITDRALSETSEDDRDKK.

As to quaternary structure, interacts (via C-terminus) with both 22 kDa and 19 kDa alpha-zeins. Interacts (via C-terminus) with OP10 (via N-terminus). As to expression, expressed in endosperm. Not detected in embryo, leaves and roots.

It localises to the endoplasmic reticulum membrane. Its function is as follows. Involved in protein body development and 22 kDa alpha-zein localization. The sequence is that of Protein FLOURY 1 from Zea mays (Maize).